Consider the following 428-residue polypeptide: 3-phosphoshikimate 1-carboxyvinyltransferase (428 aa).

Residues Lys19, Ser20, and Arg24 each contribute to the 3-phosphoshikimate site. Residue Lys19 coordinates phosphoenolpyruvate. Phosphoenolpyruvate is bound by residues Gly91 and Arg119. Residues Ser164, Gln166, Asp312, and Lys339 each contribute to the 3-phosphoshikimate site. Residue Gln166 participates in phosphoenolpyruvate binding. Asp312 functions as the Proton acceptor in the catalytic mechanism. Arg343 and Arg386 together coordinate phosphoenolpyruvate.

This sequence belongs to the EPSP synthase family. Monomer.

The protein localises to the cytoplasm. It catalyses the reaction 3-phosphoshikimate + phosphoenolpyruvate = 5-O-(1-carboxyvinyl)-3-phosphoshikimate + phosphate. The protein operates within metabolic intermediate biosynthesis; chorismate biosynthesis; chorismate from D-erythrose 4-phosphate and phosphoenolpyruvate: step 6/7. Functionally, catalyzes the transfer of the enolpyruvyl moiety of phosphoenolpyruvate (PEP) to the 5-hydroxyl of shikimate-3-phosphate (S3P) to produce enolpyruvyl shikimate-3-phosphate and inorganic phosphate. In Bacillus pumilus (strain SAFR-032), this protein is 3-phosphoshikimate 1-carboxyvinyltransferase.